The primary structure comprises 174 residues: Adenine phosphoribosyltransferase (174 aa).

It belongs to the purine/pyrimidine phosphoribosyltransferase family. Homodimer.

The protein localises to the cytoplasm. The enzyme catalyses AMP + diphosphate = 5-phospho-alpha-D-ribose 1-diphosphate + adenine. Its pathway is purine metabolism; AMP biosynthesis via salvage pathway; AMP from adenine: step 1/1. Its function is as follows. Catalyzes a salvage reaction resulting in the formation of AMP, that is energically less costly than de novo synthesis. The chain is Adenine phosphoribosyltransferase from Mycobacterium sp. (strain JLS).